Here is a 176-residue protein sequence, read N- to C-terminus: Transcriptional repressor MprA (176 aa).

The region spanning 26–160 (EILLTRLCMH…LEQITRKLLS (135 aa)) is the HTH marR-type domain.

Functionally, negative regulator of the multidrug operon emrAB. This is Transcriptional repressor MprA (mprA) from Escherichia coli O157:H7.